Reading from the N-terminus, the 244-residue chain is Phosphoadenosine 5'-phosphosulfate reductase (244 aa).

Residue C239 is the Nucleophile; cysteine thiosulfonate intermediate of the active site.

This sequence belongs to the PAPS reductase family. CysH subfamily.

The protein resides in the cytoplasm. It catalyses the reaction [thioredoxin]-disulfide + sulfite + adenosine 3',5'-bisphosphate + 2 H(+) = [thioredoxin]-dithiol + 3'-phosphoadenylyl sulfate. It functions in the pathway sulfur metabolism; hydrogen sulfide biosynthesis; sulfite from sulfate: step 3/3. Catalyzes the formation of sulfite from phosphoadenosine 5'-phosphosulfate (PAPS) using thioredoxin as an electron donor. The sequence is that of Phosphoadenosine 5'-phosphosulfate reductase from Klebsiella pneumoniae (strain 342).